The sequence spans 207 residues: ATP synthase subunit 5, mitochondrial (207 aa).

Belongs to the ATPase delta chain family. F-type ATPases have 2 components, CF(1) - the catalytic core - and CF(0) - the membrane proton channel. CF(1) has five subunits: alpha(3), beta(3), gamma(1), delta(1), epsilon(1). CF(0) has three main subunits: a, b and c.

It localises to the mitochondrion. Its subcellular location is the mitochondrion inner membrane. Mitochondrial membrane ATP synthase (F(1)F(0) ATP synthase or Complex V) produces ATP from ADP in the presence of a proton gradient across the membrane which is generated by electron transport complexes of the respiratory chain. F-type ATPases consist of two structural domains, F(1) - containing the extramembraneous catalytic core and F(0) - containing the membrane proton channel, linked together by a central stalk and a peripheral stalk. During catalysis, ATP synthesis in the catalytic domain of F(1) is coupled via a rotary mechanism of the central stalk subunits to proton translocation. Part of the complex F(0) domain and the peripheric stalk, which acts as a stator to hold the catalytic alpha(3)beta(3) subcomplex and subunit a/ATP6 static relative to the rotary elements. The sequence is that of ATP synthase subunit 5, mitochondrial (ATP5) from Eremothecium gossypii (strain ATCC 10895 / CBS 109.51 / FGSC 9923 / NRRL Y-1056) (Yeast).